Reading from the N-terminus, the 324-residue chain is Phospho-N-acetylmuramoyl-pentapeptide-transferase (324 aa).

Transmembrane regions (helical) follow at residues 5–25 (GLLVTAGVAFLISVALSPLFI), 52–72 (PTMGGIVIYVSMMVTSLIMAI), 77–97 (LGAEVSLLLLVTFGYGLIGFL), 122–142 (VIAIAFFLIGKGQAFHTYIMI), 149–169 (FELGWAYFVLVLFMLIGGSNA), 176–196 (LDGLLSGTAAIAFGAFSIIAV), 201–221 (FGVAIFCMAVVGAVLGFLVFN), 227–247 (VFMGDTGSLALGGAIAAVAIL), 253–273 (LLVIIGGVFVMETLSVIIQVI), and 302–322 (VVVTFWSVGFLLAVLGIYIGV).

It belongs to the glycosyltransferase 4 family. MraY subfamily. Mg(2+) serves as cofactor.

It localises to the cell membrane. It catalyses the reaction UDP-N-acetyl-alpha-D-muramoyl-L-alanyl-gamma-D-glutamyl-meso-2,6-diaminopimeloyl-D-alanyl-D-alanine + di-trans,octa-cis-undecaprenyl phosphate = di-trans,octa-cis-undecaprenyl diphospho-N-acetyl-alpha-D-muramoyl-L-alanyl-D-glutamyl-meso-2,6-diaminopimeloyl-D-alanyl-D-alanine + UMP. The protein operates within cell wall biogenesis; peptidoglycan biosynthesis. Functionally, catalyzes the initial step of the lipid cycle reactions in the biosynthesis of the cell wall peptidoglycan: transfers peptidoglycan precursor phospho-MurNAc-pentapeptide from UDP-MurNAc-pentapeptide onto the lipid carrier undecaprenyl phosphate, yielding undecaprenyl-pyrophosphoryl-MurNAc-pentapeptide, known as lipid I. In Bacillus cereus (strain AH820), this protein is Phospho-N-acetylmuramoyl-pentapeptide-transferase.